Consider the following 563-residue polypeptide: Merozoite receptor PK66 (563 aa).

The N-terminal stretch at 1–13 (MNKIYYILFLSAQ) is a signal peptide. Over 14 to 487 (CLVHMGKCER…DGKHKKKMLL (474 aa)) the chain is Extracellular. Asn36, Asn107, Asn176, Asn189, Asn238, and Asn441 each carry an N-linked (GlcNAc...) asparagine glycan. The helical transmembrane segment at 488-508 (IIIGVTGAVCVVAVASLFYFR) threads the bilayer. Over 509–563 (KKAQDDKYDKMDQAEAYGKTANTRKDEMLDPEASFWGEDKRASHTTPVLMEKPYY) the chain is Cytoplasmic.

The protein belongs to the apicomplexan parasites AMA1 family.

The protein resides in the membrane. Merozoite receptor PK66 is a surface antigen involved in parasite invasion of erythrocytes. The polypeptide is Merozoite receptor PK66 (PK66) (Plasmodium knowlesi (strain nuri)).